Here is a 191-residue protein sequence, read N- to C-terminus: Imidazoleglycerol-phosphate dehydratase (191 aa).

Belongs to the imidazoleglycerol-phosphate dehydratase family.

The protein resides in the cytoplasm. It carries out the reaction D-erythro-1-(imidazol-4-yl)glycerol 3-phosphate = 3-(imidazol-4-yl)-2-oxopropyl phosphate + H2O. Its pathway is amino-acid biosynthesis; L-histidine biosynthesis; L-histidine from 5-phospho-alpha-D-ribose 1-diphosphate: step 6/9. This is Imidazoleglycerol-phosphate dehydratase from Methanosarcina mazei (strain ATCC BAA-159 / DSM 3647 / Goe1 / Go1 / JCM 11833 / OCM 88) (Methanosarcina frisia).